A 102-amino-acid chain; its full sequence is Neuropeptide F (102 aa).

A signal peptide spans methionine 1–serine 29. A propeptide spanning residues arginine 30–proline 32 is cleaved from the precursor. At phenylalanine 62 the chain carries Phenylalanine amide. The propeptide occupies glycine 66 to phenylalanine 102.

This sequence belongs to the NPY family.

It localises to the secreted. Functionally, an integral part of the sensory system that mediates food signaling, providing the neural basis for the regulation of food response; coordinates larval foraging and social behavior changes during development. May have a hormonal role in females. This chain is Neuropeptide F, found in Drosophila pseudoobscura pseudoobscura (Fruit fly).